The primary structure comprises 374 residues: Very late expression factor 1 (374 aa).

Positions 169–349 (AIDTILNFID…NFDESSSDEE (181 aa)) constitute a Tyr recombinase domain. Catalysis depends on residues Arg-210, Lys-239, Arg-303, and His-326. Residues 328 to 374 (SPASTKPYLNKYNFDESSSDEESGGNNRDSSTGSSANSSSLYYQTGD) are disordered. Tyr-335 serves as the catalytic O-(3'-phospho-DNA)-tyrosine intermediate. Residues 357-367 (SSTGSSANSSS) show a composition bias toward low complexity.

Belongs to the 'phage' integrase family.

Functionally, involved in very late gene activation. This Orgyia pseudotsugata (Douglas-fir tussock moth) protein is Very late expression factor 1 (VLF-1).